The sequence spans 144 residues: Large ribosomal subunit protein uL13 (144 aa).

Belongs to the universal ribosomal protein uL13 family. Part of the 50S ribosomal subunit.

Functionally, this protein is one of the early assembly proteins of the 50S ribosomal subunit, although it is not seen to bind rRNA by itself. It is important during the early stages of 50S assembly. The protein is Large ribosomal subunit protein uL13 of Clostridium novyi (strain NT).